We begin with the raw amino-acid sequence, 2225 residues long: Nonribisomal peptide synthetase notE' (2225 aa).

The disordered stretch occupies residues 24–59 (TVRESLSSSPSPLPSLASPVSSGSEPPAFGETQPQS). The span at 28 to 49 (SLSSSPSPLPSLASPVSSGSEP) shows a compositional bias: low complexity. Positions 83-482 (QERCKEAPQS…GRRDGQLKIR (400 aa)) are adenylation 1. The region spanning 614–690 (SPTTATELML…EQAQRATPMT (77 aa)) is the Carrier 1 domain. Ser-651 is modified (O-(pantetheine 4'-phosphoryl)serine). The segment at 730 to 1142 (EDIYPCTPLQ…DLASPLDQDL (413 aa)) is condensation 1. Residues 1164–1563 (AQAMQQPSRQ…GRRDTQVKVR (400 aa)) are adenylation 2. The region spanning 1699–1775 (PVSHGAELRL…DLARCTGEEQ (77 aa)) is the Carrier 2 domain. At Ser-1736 the chain carries O-(pantetheine 4'-phosphoryl)serine. A condensation 2 region spans residues 1827-2138 (FAFHGEVSID…FILQHQNIDM (312 aa)).

This sequence belongs to the NRP synthetase family.

It carries out the reaction L-proline + L-tryptophan + 2 ATP = brevianamide F + 2 AMP + 2 diphosphate + 2 H(+). It participates in alkaloid biosynthesis. Its function is as follows. Nonribisomal peptide synthetase; part of the gene cluster that mediates the biosynthesis of notoamide, a fungal indole alkaloid that belongs to a family of natural products containing a characteristic bicyclo[2.2.2]diazaoctane core. The first step of notoamide biosynthesis involves coupling of L-proline and L-tryptophan by the bimodular NRPS notE', to produce cyclo-L-tryptophan-L-proline called brevianamide F. The reverse prenyltransferase notF' then acts as a deoxybrevianamide E synthase and converts brevianamide F to deoxybrevianamide E via reverse prenylation at C-2 of the indole ring leading to the bicyclo[2.2.2]diazaoctane core. Deoxybrevianamide E is further hydroxylated at C-6 of the indole ring, likely catalyzed by the cytochrome P450 monooxygenase notG', to yield 6-hydroxy-deoxybrevianamide E. 6-hydroxy-deoxybrevianamide E is a specific substrate of the prenyltransferase notC' for normal prenylation at C-7 to produce 6-hydroxy-7-prenyl-deoxybrevianamide, also called notoamide S. As the proposed pivotal branching point in notoamide biosynthesis, notoamide S can be diverted to notoamide E through an oxidative pyran ring closure putatively catalyzed by either notH' cytochrome P450 monooxygenase or the notD' FAD-linked oxidoreductase. This step would be followed by an indole 2,3-epoxidation-initiated pinacol-like rearrangement catalyzed by the notB' FAD-dependent monooxygenase leading to the formation of notoamide C and notoamide D. On the other hand notoamide S is converted to notoamide T by notH' (or notD'), a bifunctional oxidase that also functions as the intramolecular Diels-Alderase responsible for generation of (-)-notoamide T. To generate antipodal (+)-notoaminide T, notH (or notD) in Aspergillus strain MF297-2 is expected to catalyze a Diels-Alder reaction leading to the opposite stereochemistry. The remaining oxidoreductase notD' (or notH') likely catalyzes the oxidative pyran ring formation to yield (-)-stephacidin A. The FAD-dependent monooxygenase notI' is highly similar to notB' and is predicted to catalyze a similar conversion from (-)-stephacidin A to (+)-notoamide B via the 2,3-epoxidation of (-)-stephacidin A followed by a pinacol-type rearrangement. Finally, it remains unclear which enzyme could be responsible for the final hydroxylation steps leading to notoamide A and sclerotiamide. This chain is Nonribisomal peptide synthetase notE', found in Aspergillus versicolor.